A 911-amino-acid polypeptide reads, in one-letter code: General transcription factor 3C polypeptide 2 (911 aa).

2 disordered regions span residues 34 to 187 (LDVK…RRRA) and 205 to 297 (ALPA…MAPN). Residues 35–46 (DVKTSSEMTSAE) show a composition bias toward polar residues. Residue serine 63 is modified to Phosphoserine. Residues 64–81 (PDQRRLPPEQESLSRLEQ) show a composition bias toward basic and acidic residues. Residues 92–112 (SKPRASKPGRKRGGRTRKGPK) are compositionally biased toward basic residues. Positions 114 to 123 (PQQPNPPSAP) are enriched in pro residues. Phosphoserine is present on residues serine 132, serine 165, serine 167, serine 220, and serine 260. Residues 253–262 (EAEDVEESEG) show a composition bias toward acidic residues. Positions 263 to 275 (PSESSSEPEPAVP) are enriched in low complexity. WD repeat units follow at residues 465–521 (CDNG…ALLA) and 552–593 (SECG…PLQR). A Phosphoserine modification is found at serine 597. One copy of the WD 3 repeat lies at 611–651 (AHDQAVRTLQWCKANSHFLASAGSDRKIKFWDLRRPYEPIN). The tract at residues 765 to 785 (SPEGPDHSSASSGVPNPPKAR) is disordered. One copy of the WD 4 repeat lies at 832–874 (LQLEAIHKVRFSPNLDSYGWLVSGGQSGLVRIHFVRGLASPLG). A phosphoserine mark is found at serine 871, serine 892, and serine 893. The interval 889 to 911 (FQPSSPTRRPGFSPTSHRLLPTP) is disordered. A Phosphothreonine modification is found at threonine 895. The residue at position 901 (serine 901) is a Phosphoserine.

Part of the TFIIIC subcomplex TFIIIC2, consisting of six subunits, GTF3C1, GTF3C2, GTF3C3, GTF3C4, GTF3C5 and GTF3C6.

The protein resides in the nucleus. In terms of biological role, required for RNA polymerase III-mediated transcription. Component of TFIIIC that initiates transcription complex assembly on tRNA and is required for transcription of 5S rRNA and other stable nuclear and cytoplasmic RNAs. May play a direct role in stabilizing interactions of TFIIIC2 with TFIIIC1. The chain is General transcription factor 3C polypeptide 2 (GTF3C2) from Pongo abelii (Sumatran orangutan).